The sequence spans 200 residues: Glycerol-3-phosphate acyltransferase (200 aa).

A run of 4 helical transmembrane segments spans residues 1-21, 84-104, 116-136, and 159-179; these read MITV…FAVV, VIAG…FLAF, ILLG…MVVA, and FLLE…LLIL.

The protein belongs to the PlsY family. Probably interacts with PlsX.

The protein localises to the cell inner membrane. The catalysed reaction is an acyl phosphate + sn-glycerol 3-phosphate = a 1-acyl-sn-glycero-3-phosphate + phosphate. The protein operates within lipid metabolism; phospholipid metabolism. Its function is as follows. Catalyzes the transfer of an acyl group from acyl-phosphate (acyl-PO(4)) to glycerol-3-phosphate (G3P) to form lysophosphatidic acid (LPA). This enzyme utilizes acyl-phosphate as fatty acyl donor, but not acyl-CoA or acyl-ACP. The protein is Glycerol-3-phosphate acyltransferase of Nitrosomonas europaea (strain ATCC 19718 / CIP 103999 / KCTC 2705 / NBRC 14298).